A 454-amino-acid polypeptide reads, in one-letter code: Putative KilA-N domain-containing protein L4 (454 aa).

Positions 1–12 are enriched in basic residues; it reads MPQKTSKSKSSR. Residues 1–159 are disordered; it reads MPQKTSKSKS…DVPEEEYDDN (159 aa). The span at 14-64 shows a compositional bias: basic and acidic residues; the sequence is RYIEDSDDETRGRSRNRSIEKSRSRSLDKSQKKSRDKSLTRSRSKSPEKSK. The span at 65 to 79 shows a compositional bias: basic residues; sequence SRSKSLTRSRSKSPK. Composition is skewed to acidic residues over residues 98–123 and 130–158; these read YTTE…DEEL and ESDE…EYDD. Residues 172 to 276 form the KilA-N domain; sequence EFARGKFGDF…LKVSDIVIEY (105 aa).

This chain is Putative KilA-N domain-containing protein L4, found in Acanthamoeba polyphaga mimivirus (APMV).